We begin with the raw amino-acid sequence, 353 residues long: Protein Wnt-11b-2 (353 aa).

Positions 1 to 22 (MALIRHCVTLLLILCCSRLCGA) are cleaved as a signal peptide. N-linked (GlcNAc...) asparagine glycosylation is found at N31, N38, and N88. Cystine bridges form between C78–C89, C128–C136, C138–C155, C208–C222, and C210–C217. S214 carries the O-palmitoleoyl serine; by PORCN lipid modification. Sulfotyrosine occurs at positions 274 and 281. Cystine bridges form between C282–C313, C298–C308, C312–C352, C328–C343, C330–C340, and C335–C336. N-linked (GlcNAc...) asparagine glycosylation is present at N299.

It belongs to the Wnt family. In terms of assembly, homodimer. Secreted homodimers form a complex with wnt5a homodimers; tyrosine sulfation of both wnt11 and wnt5a by tpst1 is required for this interaction. Interacts with the transmembrane receptor fzd7/fz7. Interacts with lrp6 and ryk. Interacts with tdgf1/frl1. Interacts weakly with frzb1 and strongly with frzb2/crescent. Interaction with frzb2/crescent antagonizes wnt11 function in the neuroectoderm, but enhances it in mesodermal tissue. Post-translationally, glycosylation is required for protein secretion. Palmitoleoylation is required for efficient binding to frizzled receptors. Depalmitoleoylation leads to Wnt signaling pathway inhibition.

Its subcellular location is the secreted. The protein resides in the extracellular space. It is found in the extracellular matrix. Functionally, ligand for the frizzled7 transmembrane receptor. Primarily acts via non-canonical Wnt pathways mediated by either Ca(2+) and PKC, or by JNK and dvl2/dsh. Depending on the cellular context, can also signal via the canonical Wnt pathway mediated by beta-catenin and dvl2/dsh. May also inhibit canonical Wnt signaling. Maternally initiates dorsal/ventral axis formation by a canonical route, which signals via lrp6. In a complex with wnt5a, activates the canonical and non-canonical processes involved in axis formation. In the non-canonical pathway, acts through fzd7/fz7 to induce phosphorylation of dvl2/dsh. Signals through a non-canonical Wnt pathway to regulate convergent extension movements during gastrulation. Interactions with the secreted Wnt antagonist sfrp5 to coordinate foregut development, acting via a non-canonical wnt pathway whereby sfrp5 restricts wnt11b activity to prevent inappropriate foregut formation. Mediates cardiogenesis via non-canonical Wnt signaling involving JNK-activation and PKC. Acts redundantly with wnt11/wnt11r during pronephros induction. The chain is Protein Wnt-11b-2 from Xenopus tropicalis (Western clawed frog).